A 375-amino-acid polypeptide reads, in one-letter code: Trans-enoyl reductase cghC (375 aa).

48-51 contacts NADP(+); the sequence is VDTK. 135 to 142 serves as a coordination point for substrate; it reads NAWYTSGW. NADP(+) contacts are provided by residues 188–191, 211–214, and 276–277; these read SSST, SARN, and LD. A substrate-binding site is contributed by 297 to 301; the sequence is GPELV. NADP(+) is bound at residue 366-367; that stretch reads VS.

Belongs to the zinc-containing alcohol dehydrogenase family. In terms of assembly, monomer.

It catalyses the reaction (2S,4S)-4-hydroxy-4-methylglutamate + 8 malonyl-CoA + 3 S-adenosyl-L-methionine + ATP + 8 NADPH + 11 H(+) = (2S)-3-[(2S)-3,5-dioxo-4-[(2E,4R,6R,8E,10E,12E)-4,6,12-trimethyltetradeca-2,8,10,12-tetraenoyl]pyrrolidin-2-yl]-2-hydroxy-2-methylpropanoate + AMP + 3 S-adenosyl-L-homocysteine + 8 CO2 + diphosphate + 8 NADP(+) + 8 CoA + 6 H2O. It participates in secondary metabolite biosynthesis. In terms of biological role, trans-enoyl reductase; part of the gene cluster that mediates the biosynthesis of the tetramic acid Sch210972, a potential anti-HIV fungal natural product that contains a decalin core. The PKS module of cghG together with the enoylreductase cghC catalyze the formation of the polyketide unit which is then conjugated to 4-hydroxyl-4-methyl glutamate (HMG) by the condensation domain of the cghG NRPS module. One unique structural feature of Sch210972 is the tetramic acid motif proposed to be derived from the non-proteinogenic amino acid HMG, by a Dieckmann-type condensation catalyzed by the reductase domain of cghG. The aldolase cghB catalyzes the aldol condensation of 2 molecules of pyruvic acid to yield the intermediate 4-hydroxyl-4-methyl-2-oxoglutarate (HMOG), which can then be stereoselectively transaminated by an unidentified enzyme to form HMG. The Diels-Alderase cghA then uses the Dieckmann product released by cghG as substrate and catalyzes the Diels-Alder cycloaddition to form the decalin ring of Sch210972. CghA also suppresses the nonenzymatic formation of the alternative stereoisomer. This is Trans-enoyl reductase cghC from Chaetomium globosum (strain ATCC 6205 / CBS 148.51 / DSM 1962 / NBRC 6347 / NRRL 1970) (Soil fungus).